The sequence spans 347 residues: MNEELLNEIPLLEDKAVFEIESASSLQDLEKVRLSYLGRKGVIKAYFDDLRKVEDTEKKRDLGAIINVLRNKLDQLIMNKESILKAEEVNFKLQNEAIDITLPVRPEKIGRAHPLSKVMNEVKLIFAHMGFRAVNGPDIEDEFHVFDALNTPSHHPAREEQDTFYLKNKINDKRMMLRTHTSSMQIRAMKKAKTFPIKIVAAGRVYRNDFDATHTPMFHQMEGLYVNENVNMGQLKFTIHHFLNKFFGDKELKIRFRNSFFPFTEPSAEVDISYKESKWIEVLGCGIVHPNVFQNVGIDHTKYSGFAFGIGIERLAMLKYQISDLRNFYDNKISWLSHYGFHFSSLR.

Mg(2+) is bound at residue Glu265.

This sequence belongs to the class-II aminoacyl-tRNA synthetase family. Phe-tRNA synthetase alpha subunit type 1 subfamily. As to quaternary structure, tetramer of two alpha and two beta subunits. The cofactor is Mg(2+).

The protein localises to the cytoplasm. It carries out the reaction tRNA(Phe) + L-phenylalanine + ATP = L-phenylalanyl-tRNA(Phe) + AMP + diphosphate + H(+). The protein is Phenylalanine--tRNA ligase alpha subunit of Wolbachia sp. subsp. Brugia malayi (strain TRS).